The following is a 131-amino-acid chain: UPF0102 protein RALTA_A3032 (131 aa).

The segment covering 1-12 (MMRSFKSTQEPS) has biased composition (polar residues). The tract at residues 1-21 (MMRSFKSTQEPSRQARGAQAE) is disordered.

It belongs to the UPF0102 family.

The protein is UPF0102 protein RALTA_A3032 of Cupriavidus taiwanensis (strain DSM 17343 / BCRC 17206 / CCUG 44338 / CIP 107171 / LMG 19424 / R1) (Ralstonia taiwanensis (strain LMG 19424)).